The following is a 147-amino-acid chain: Flagellar assembly factor FliW (147 aa).

It belongs to the FliW family. In terms of assembly, interacts with translational regulator CsrA and flagellin(s).

It localises to the cytoplasm. Functionally, acts as an anti-CsrA protein, binds CsrA and prevents it from repressing translation of its target genes, one of which is flagellin. Binds to flagellin and participates in the assembly of the flagellum. The protein is Flagellar assembly factor FliW of Chromobacterium violaceum (strain ATCC 12472 / DSM 30191 / JCM 1249 / CCUG 213 / NBRC 12614 / NCIMB 9131 / NCTC 9757 / MK).